We begin with the raw amino-acid sequence, 167 residues long: Lipoprotein signal peptidase (167 aa).

4 consecutive transmembrane segments (helical) span residues Thr8–Leu28, Trp46–Phe66, Gln68–Leu88, and Ile101–Gly121. Active-site residues include Asp125 and Asp143. Residues Phe139–Phe159 form a helical membrane-spanning segment.

Belongs to the peptidase A8 family.

It is found in the cell inner membrane. The enzyme catalyses Release of signal peptides from bacterial membrane prolipoproteins. Hydrolyzes -Xaa-Yaa-Zaa-|-(S,diacylglyceryl)Cys-, in which Xaa is hydrophobic (preferably Leu), and Yaa (Ala or Ser) and Zaa (Gly or Ala) have small, neutral side chains.. Its pathway is protein modification; lipoprotein biosynthesis (signal peptide cleavage). Its function is as follows. This protein specifically catalyzes the removal of signal peptides from prolipoproteins. This Chlamydia trachomatis serovar L2 (strain ATCC VR-902B / DSM 19102 / 434/Bu) protein is Lipoprotein signal peptidase.